Here is a 149-residue protein sequence, read N- to C-terminus: Transcriptional repressor NrdR (149 aa).

A zinc finger spans residues 3 to 34 (CPFCFAVDTKVIDSRLVGGGSSVRRRRQCLVC). An ATP-cone domain is found at 49 to 139 (PRVVKSNDVR…VYRSFEDIKE (91 aa)).

The protein belongs to the NrdR family. The cofactor is Zn(2+).

Its function is as follows. Negatively regulates transcription of bacterial ribonucleotide reductase nrd genes and operons by binding to NrdR-boxes. This is Transcriptional repressor NrdR from Shigella boydii serotype 18 (strain CDC 3083-94 / BS512).